A 154-amino-acid polypeptide reads, in one-letter code: Large ribosomal subunit protein uL23 (154 aa).

The tract at residues 1-39 is disordered; that stretch reads MAPAKADPSKKSDPKAQAAKVAKAVKSGSTLKKKSQKIR. Positions 15–26 are enriched in low complexity; that stretch reads KAQAAKVAKAVK.

It belongs to the universal ribosomal protein uL23 family.

Functionally, this protein binds to a specific region on the 26S rRNA. The protein is Large ribosomal subunit protein uL23 (RPL23A) of Nicotiana tabacum (Common tobacco).